We begin with the raw amino-acid sequence, 319 residues long: tRNA(Ile)-lysidine synthase (319 aa).

Position 32 to 37 (32 to 37) interacts with ATP; it reads SGGSDS.

It belongs to the tRNA(Ile)-lysidine synthase family.

The protein resides in the cytoplasm. The catalysed reaction is cytidine(34) in tRNA(Ile2) + L-lysine + ATP = lysidine(34) in tRNA(Ile2) + AMP + diphosphate + H(+). In terms of biological role, ligates lysine onto the cytidine present at position 34 of the AUA codon-specific tRNA(Ile) that contains the anticodon CAU, in an ATP-dependent manner. Cytidine is converted to lysidine, thus changing the amino acid specificity of the tRNA from methionine to isoleucine. The sequence is that of tRNA(Ile)-lysidine synthase from Chlamydia pneumoniae (Chlamydophila pneumoniae).